The primary structure comprises 204 residues: Methylthioribulose-1-phosphate dehydratase (204 aa).

Residues H94 and H96 each contribute to the Zn(2+) site.

Belongs to the aldolase class II family. MtnB subfamily. Requires Zn(2+) as cofactor.

It carries out the reaction 5-(methylsulfanyl)-D-ribulose 1-phosphate = 5-methylsulfanyl-2,3-dioxopentyl phosphate + H2O. Its pathway is amino-acid biosynthesis; L-methionine biosynthesis via salvage pathway; L-methionine from S-methyl-5-thio-alpha-D-ribose 1-phosphate: step 2/6. Its function is as follows. Catalyzes the dehydration of methylthioribulose-1-phosphate (MTRu-1-P) into 2,3-diketo-5-methylthiopentyl-1-phosphate (DK-MTP-1-P). The chain is Methylthioribulose-1-phosphate dehydratase from Pseudomonas syringae pv. tomato (strain ATCC BAA-871 / DC3000).